We begin with the raw amino-acid sequence, 503 residues long: Maturase K (503 aa).

Belongs to the intron maturase 2 family. MatK subfamily.

It is found in the plastid. Its subcellular location is the chloroplast. Functionally, usually encoded in the trnK tRNA gene intron. Probably assists in splicing its own and other chloroplast group II introns. The sequence is that of Maturase K from Diospyros virginiana (American persimmon).